A 211-amino-acid chain; its full sequence is SsrA-binding protein (211 aa).

Disordered regions lie at residues 1-20 and 170-211; these read MHRR…PERS and RLRR…RHEN. Polar residues predominate over residues 177–187; it reads QRNTQRSVTPR.

This sequence belongs to the SmpB family.

It localises to the cytoplasm. Functionally, required for rescue of stalled ribosomes mediated by trans-translation. Binds to transfer-messenger RNA (tmRNA), required for stable association of tmRNA with ribosomes. tmRNA and SmpB together mimic tRNA shape, replacing the anticodon stem-loop with SmpB. tmRNA is encoded by the ssrA gene; the 2 termini fold to resemble tRNA(Ala) and it encodes a 'tag peptide', a short internal open reading frame. During trans-translation Ala-aminoacylated tmRNA acts like a tRNA, entering the A-site of stalled ribosomes, displacing the stalled mRNA. The ribosome then switches to translate the ORF on the tmRNA; the nascent peptide is terminated with the 'tag peptide' encoded by the tmRNA and targeted for degradation. The ribosome is freed to recommence translation, which seems to be the essential function of trans-translation. This chain is SsrA-binding protein, found in Tropheryma whipplei (strain TW08/27) (Whipple's bacillus).